The sequence spans 560 residues: Glucose-6-phosphate isomerase, cytosolic (560 aa).

Alanine 2 carries the post-translational modification N-acetylalanine. Residue glutamate 361 is the Proton donor of the active site. Active-site residues include histidine 392 and lysine 517.

The protein belongs to the GPI family. As to quaternary structure, homodimer.

The protein localises to the cytoplasm. The enzyme catalyses alpha-D-glucose 6-phosphate = beta-D-fructose 6-phosphate. Its pathway is carbohydrate degradation; glycolysis; D-glyceraldehyde 3-phosphate and glycerone phosphate from D-glucose: step 2/4. Inhibited by glycerol-3-P (G3P). This chain is Glucose-6-phosphate isomerase, cytosolic (PGIC), found in Arabidopsis thaliana (Mouse-ear cress).